Reading from the N-terminus, the 291-residue chain is ATP phosphoribosyltransferase (291 aa).

This sequence belongs to the ATP phosphoribosyltransferase family. Long subfamily. Mg(2+) serves as cofactor.

Its subcellular location is the cytoplasm. The catalysed reaction is 1-(5-phospho-beta-D-ribosyl)-ATP + diphosphate = 5-phospho-alpha-D-ribose 1-diphosphate + ATP. Its pathway is amino-acid biosynthesis; L-histidine biosynthesis; L-histidine from 5-phospho-alpha-D-ribose 1-diphosphate: step 1/9. Feedback inhibited by histidine. In terms of biological role, catalyzes the condensation of ATP and 5-phosphoribose 1-diphosphate to form N'-(5'-phosphoribosyl)-ATP (PR-ATP). Has a crucial role in the pathway because the rate of histidine biosynthesis seems to be controlled primarily by regulation of HisG enzymatic activity. This Desulfosudis oleivorans (strain DSM 6200 / JCM 39069 / Hxd3) (Desulfococcus oleovorans) protein is ATP phosphoribosyltransferase.